We begin with the raw amino-acid sequence, 355 residues long: uncharacterized protein (355 aa).

58 to 65 contributes to the ATP binding site; that stretch reads GYIIFGIK.

This is an uncharacterized protein from Ureaplasma parvum serovar 3 (strain ATCC 700970).